Consider the following 335-residue polypeptide: Phosphate acyltransferase (335 aa).

This sequence belongs to the PlsX family. Homodimer. Probably interacts with PlsY.

The protein resides in the cytoplasm. The enzyme catalyses a fatty acyl-[ACP] + phosphate = an acyl phosphate + holo-[ACP]. The protein operates within lipid metabolism; phospholipid metabolism. In terms of biological role, catalyzes the reversible formation of acyl-phosphate (acyl-PO(4)) from acyl-[acyl-carrier-protein] (acyl-ACP). This enzyme utilizes acyl-ACP as fatty acyl donor, but not acyl-CoA. The chain is Phosphate acyltransferase from Streptococcus pyogenes serotype M1.